The following is a 295-amino-acid chain: NAD kinase (295 aa).

Residue Asp72 is the Proton acceptor of the active site. NAD(+)-binding positions include 72–73 (DG), 146–147 (ND), Arg157, Lys174, Asp176, 187–192 (TAYALS), and Gln247.

Belongs to the NAD kinase family. It depends on a divalent metal cation as a cofactor.

It is found in the cytoplasm. It carries out the reaction NAD(+) + ATP = ADP + NADP(+) + H(+). In terms of biological role, involved in the regulation of the intracellular balance of NAD and NADP, and is a key enzyme in the biosynthesis of NADP. Catalyzes specifically the phosphorylation on 2'-hydroxyl of the adenosine moiety of NAD to yield NADP. In Azotobacter vinelandii (strain DJ / ATCC BAA-1303), this protein is NAD kinase.